We begin with the raw amino-acid sequence, 321 residues long: GTP 3',8-cyclase (321 aa).

Positions 5–227 (SYDRVVDYLR…DEGYDGASPS (223 aa)) constitute a Radical SAM core domain. Arginine 14 is a binding site for GTP. Residues cysteine 21 and cysteine 25 each coordinate [4Fe-4S] cluster. Tyrosine 27 contacts S-adenosyl-L-methionine. Residue cysteine 28 coordinates [4Fe-4S] cluster. Arginine 64 is a binding site for GTP. Glycine 68 is a binding site for S-adenosyl-L-methionine. Residue threonine 95 coordinates GTP. Serine 119 is an S-adenosyl-L-methionine binding site. Lysine 155 lines the GTP pocket. Methionine 189 lines the S-adenosyl-L-methionine pocket. The [4Fe-4S] cluster site is built by cysteine 249 and cysteine 252. Residue 254–256 (RIR) coordinates GTP. [4Fe-4S] cluster is bound at residue cysteine 266.

This sequence belongs to the radical SAM superfamily. MoaA family. As to quaternary structure, monomer and homodimer. Requires [4Fe-4S] cluster as cofactor.

It catalyses the reaction GTP + AH2 + S-adenosyl-L-methionine = (8S)-3',8-cyclo-7,8-dihydroguanosine 5'-triphosphate + 5'-deoxyadenosine + L-methionine + A + H(+). It functions in the pathway cofactor biosynthesis; molybdopterin biosynthesis. Its function is as follows. Catalyzes the cyclization of GTP to (8S)-3',8-cyclo-7,8-dihydroguanosine 5'-triphosphate. The polypeptide is GTP 3',8-cyclase (Sulfurimonas denitrificans (strain ATCC 33889 / DSM 1251) (Thiomicrospira denitrificans (strain ATCC 33889 / DSM 1251))).